The following is a 207-amino-acid chain: Urease accessory protein UreG (207 aa).

Residue 12–19 (GPVGAGKT) participates in GTP binding.

It belongs to the SIMIBI class G3E GTPase family. UreG subfamily. Homodimer. UreD, UreF and UreG form a complex that acts as a GTP-hydrolysis-dependent molecular chaperone, activating the urease apoprotein by helping to assemble the nickel containing metallocenter of UreC. The UreE protein probably delivers the nickel.

Its subcellular location is the cytoplasm. Facilitates the functional incorporation of the urease nickel metallocenter. This process requires GTP hydrolysis, probably effectuated by UreG. This Cereibacter sphaeroides (strain KD131 / KCTC 12085) (Rhodobacter sphaeroides) protein is Urease accessory protein UreG.